Here is a 299-residue protein sequence, read N- to C-terminus: Probable phosphate butyryltransferase (299 aa).

It belongs to the phosphate acetyltransferase and butyryltransferase family.

The enzyme catalyses butanoyl-CoA + phosphate = butanoyl phosphate + CoA. In terms of biological role, catalyzes the conversion of butyryl-CoA through butyryl phosphate to butyrate. The protein is Probable phosphate butyryltransferase (yqiS) of Bacillus subtilis (strain 168).